Reading from the N-terminus, the 369-residue chain is Aminomethyltransferase (369 aa).

The protein belongs to the GcvT family. As to quaternary structure, the glycine cleavage system is composed of four proteins: P, T, L and H.

The catalysed reaction is N(6)-[(R)-S(8)-aminomethyldihydrolipoyl]-L-lysyl-[protein] + (6S)-5,6,7,8-tetrahydrofolate = N(6)-[(R)-dihydrolipoyl]-L-lysyl-[protein] + (6R)-5,10-methylene-5,6,7,8-tetrahydrofolate + NH4(+). Functionally, the glycine cleavage system catalyzes the degradation of glycine. The polypeptide is Aminomethyltransferase (Xanthomonas campestris pv. campestris (strain 8004)).